The chain runs to 208 residues: Uracil phosphoribosyltransferase (208 aa).

5-phospho-alpha-D-ribose 1-diphosphate contacts are provided by residues Arg-78, Arg-103, and 130–138; that span reads DPMLATGGS. Uracil contacts are provided by residues Ile-193 and 198–200; that span reads GDA. Asp-199 is a 5-phospho-alpha-D-ribose 1-diphosphate binding site.

It belongs to the UPRTase family. The cofactor is Mg(2+).

It catalyses the reaction UMP + diphosphate = 5-phospho-alpha-D-ribose 1-diphosphate + uracil. Its pathway is pyrimidine metabolism; UMP biosynthesis via salvage pathway; UMP from uracil: step 1/1. Allosterically activated by GTP. Its function is as follows. Catalyzes the conversion of uracil and 5-phospho-alpha-D-ribose 1-diphosphate (PRPP) to UMP and diphosphate. The protein is Uracil phosphoribosyltransferase of Shewanella baltica (strain OS223).